Reading from the N-terminus, the 636-residue chain is Phosphomethylpyrimidine synthase (636 aa).

Positions 48–70 are disordered; it reads DDTPTDFGGEKNPPVRVYDTSGP. Substrate-binding positions include Asn231, Met260, Tyr289, His325, 345–347, 386–389, and Glu425; these read SRG and DGLR. His429 contributes to the Zn(2+) binding site. Tyr452 lines the substrate pocket. A Zn(2+)-binding site is contributed by His493. [4Fe-4S] cluster is bound by residues Cys573, Cys576, and Cys581.

This sequence belongs to the ThiC family. In terms of assembly, homodimer. The cofactor is [4Fe-4S] cluster.

The enzyme catalyses 5-amino-1-(5-phospho-beta-D-ribosyl)imidazole + S-adenosyl-L-methionine = 4-amino-2-methyl-5-(phosphooxymethyl)pyrimidine + CO + 5'-deoxyadenosine + formate + L-methionine + 3 H(+). It participates in cofactor biosynthesis; thiamine diphosphate biosynthesis. Functionally, catalyzes the synthesis of the hydroxymethylpyrimidine phosphate (HMP-P) moiety of thiamine from aminoimidazole ribotide (AIR) in a radical S-adenosyl-L-methionine (SAM)-dependent reaction. In Cellvibrio japonicus (strain Ueda107) (Pseudomonas fluorescens subsp. cellulosa), this protein is Phosphomethylpyrimidine synthase.